We begin with the raw amino-acid sequence, 2523 residues long: Non-reducing polyketide synthase Preu3 (2523 aa).

The N-terminal acylcarrier protein transacylase domain (SAT) stretch occupies residues 58 to 247 (LQSLASERRA…KILAMTGSFH (190 aa)). The Ketosynthase family 3 (KS3) domain maps to 373–792 (DNAVAVVGMA…GSNGAMIVCQ (420 aa)). Catalysis depends on for beta-ketoacyl synthase activity residues cysteine 539, histidine 674, and histidine 715. Residues 900–1207 (CFGGQVKAFV…KAFGSLADAT (308 aa)) are malonyl-CoA:ACP transacylase (MAT) domain. Serine 986 functions as the For acyl/malonyl transferase activity in the catalytic mechanism. The interval 1271 to 1398 (HELLTFSSFE…GLVAFGGTVE (128 aa)) is N-terminal hotdog fold. Positions 1271 to 1573 (HELLTFSSFE…FTRVTVPGLR (303 aa)) constitute a PKS/mFAS DH domain. Residues 1301–1568 (LVKGHAVVAQ…ALGCRFTRVT (268 aa)) form a product template (PT) domain region. The Proton acceptor; for dehydratase activity role is filled by histidine 1305. Residues 1421–1573 (ECDALRGSAT…FTRVTVPGLR (153 aa)) are C-terminal hotdog fold. Aspartate 1483 acts as the Proton donor; for dehydratase activity in catalysis. The segment at 1579-1601 (ANGDARAQERPSGSRISPSPLAP) is disordered. Positions 1639 to 1713 (VDYLAQVKAL…KLAEYLAKTL (75 aa)) constitute a Carrier domain. At serine 1673 the chain carries O-(pantetheine 4'-phosphoryl)serine. The tract at residues 1735-1757 (DAEQSSDESPYDSTDDSASGYGD) is disordered. The segment covering 1738 to 1749 (QSSDESPYDSTD) has biased composition (acidic residues). The tract at residues 1986–2085 (LEIGGGTGGT…MRQLLSSEGF (100 aa)) is methyltransferase (CMeT) domain. Residues 2218–2520 (LILHGGGHVL…RALEWLVEQC (303 aa)) form a thioesterase (TE) domain region.

Pantetheine 4'-phosphate is required as a cofactor.

It carries out the reaction 3 malonyl-CoA + acetyl-CoA + S-adenosyl-L-methionine + H(+) = 3-methylorsellinate + S-adenosyl-L-homocysteine + 3 CO2 + 4 CoA. Functionally, non-reducing polyketide synthase; part of a gene cluster that mediates the biosynthesis of a yet unidentified natural product. The first step in the pathway is performed by Preu3 that condenses one acetyl-CoA starter unit with 3 malonyl-CoA units. Preu3 also catalyzes one methylation step to produce 3-methylorsellinate, an intermediate that exhibits significant antibacterial activities against methicillin-resistant Staphylococcus aureus, multidrug-resistant Enterococcus faecalis, multidrug-resistant Enterococcus faecium, and multidrug-resistant Staphylococcus epidermidis. The chain is Non-reducing polyketide synthase Preu3 from Preussia isomera (Coprophilous fungus).